A 346-amino-acid chain; its full sequence is uncharacterized protein (346 aa).

The protein belongs to the MG067/MG068/MG395 family.

This is an uncharacterized protein from Mycoplasma pneumoniae (strain ATCC 29342 / M129 / Subtype 1) (Mycoplasmoides pneumoniae).